Here is a 106-residue protein sequence, read N- to C-terminus: METLDYRFDGTTHAHFPTNAVLVGVLASGNLEILLEPAALDGAMTVRIITAAQGFGSVWQAVITDFARRHPLRDVRISINDAGATPAVVSLRLDQAVETLLGGGTP.

O-(phosphoribosyl dephospho-coenzyme A)serine is present on S28.

Belongs to the MdcC family. Post-translationally, covalently binds the prosthetic group of malonate decarboxylase.

The protein resides in the cytoplasm. Functionally, subunit of malonate decarboxylase, it is an acyl carrier protein to which acetyl and malonyl thioester residues are bound via a 2'-(5''-phosphoribosyl)-3'-dephospho-CoA prosthetic group and turn over during the catalytic mechanism. This is Malonate decarboxylase acyl carrier protein from Stenotrophomonas maltophilia (strain R551-3).